Consider the following 495-residue polypeptide: L-arabinose isomerase (495 aa).

Mn(2+)-binding residues include glutamate 305, glutamate 332, histidine 349, and histidine 448.

This sequence belongs to the arabinose isomerase family. Mn(2+) is required as a cofactor.

The catalysed reaction is beta-L-arabinopyranose = L-ribulose. It participates in carbohydrate degradation; L-arabinose degradation via L-ribulose; D-xylulose 5-phosphate from L-arabinose (bacterial route): step 1/3. Catalyzes the conversion of L-arabinose to L-ribulose. The polypeptide is L-arabinose isomerase (Mannheimia succiniciproducens (strain KCTC 0769BP / MBEL55E)).